Consider the following 416-residue polypeptide: Maltoporin (416 aa).

Residues 1–26 (MELTMKKVSVIAAAVAATLAAGSAFA) form the signal peptide.

This sequence belongs to the porin LamB (TC 1.B.3) family. Homotrimer formed of three 18-stranded antiparallel beta-barrels, containing three independent channels.

It localises to the cell outer membrane. It carries out the reaction beta-maltose(in) = beta-maltose(out). Functionally, involved in the transport of maltose and maltodextrins. The chain is Maltoporin from Vibrio cholerae serotype O1 (strain ATCC 39541 / Classical Ogawa 395 / O395).